The sequence spans 550 residues: Undecaprenyl phosphate-alpha-4-amino-4-deoxy-L-arabinose arabinosyl transferase 2 (550 aa).

The next 11 helical transmembrane spans lie at 4–24 (LKPGIGLMCIIALYYLLPLSF), 81–101 (FAVHFGSAFSIALTALMVYWL), 110–132 (WLGLTAAAIYSSCLLVYSIGTYA), 176–196 (FMTKGFLALAVPVLSVLPWVI), 204–224 (VFIYGPLALLGAVATSLPWVI), 255–275 (APFWYYLPVLLAGTLPWLGLL), 288–308 (TQSGAFYLLGWVVMPLLFFSL), 313–333 (LPTYILPSFAPLALLMARYAA), 348–368 (LLFGLLCVITVASVLAPWGLA), 381–401 (VLLGVLGFLVWAAVGGLTLRA), and 409–429 (AALCPLGIALLVGQAIPQQVI).

This sequence belongs to the glycosyltransferase 83 family.

It is found in the cell inner membrane. The catalysed reaction is 4-amino-4-deoxy-alpha-L-arabinopyranosyl di-trans,octa-cis-undecaprenyl phosphate + lipid IVA = lipid IIA + di-trans,octa-cis-undecaprenyl phosphate.. It functions in the pathway lipopolysaccharide metabolism; 4-amino-4-deoxy-beta-L-arabinose-lipid A biosynthesis. Functionally, catalyzes the transfer of the L-Ara4N moiety of the glycolipid undecaprenyl phosphate-alpha-L-Ara4N to lipid A. The modified arabinose is attached to lipid A and is required for resistance to polymyxin and cationic antimicrobial peptides. This chain is Undecaprenyl phosphate-alpha-4-amino-4-deoxy-L-arabinose arabinosyl transferase 2, found in Sodalis glossinidius (strain morsitans).